A 582-amino-acid chain; its full sequence is Proline--tRNA ligase (582 aa).

It belongs to the class-II aminoacyl-tRNA synthetase family. ProS type 1 subfamily. As to quaternary structure, homodimer.

The protein resides in the cytoplasm. It carries out the reaction tRNA(Pro) + L-proline + ATP = L-prolyl-tRNA(Pro) + AMP + diphosphate. Catalyzes the attachment of proline to tRNA(Pro) in a two-step reaction: proline is first activated by ATP to form Pro-AMP and then transferred to the acceptor end of tRNA(Pro). As ProRS can inadvertently accommodate and process non-cognate amino acids such as alanine and cysteine, to avoid such errors it has two additional distinct editing activities against alanine. One activity is designated as 'pretransfer' editing and involves the tRNA(Pro)-independent hydrolysis of activated Ala-AMP. The other activity is designated 'posttransfer' editing and involves deacylation of mischarged Ala-tRNA(Pro). The misacylated Cys-tRNA(Pro) is not edited by ProRS. In Mycobacterium bovis (strain ATCC BAA-935 / AF2122/97), this protein is Proline--tRNA ligase.